Reading from the N-terminus, the 2078-residue chain is Nascent polypeptide-associated complex subunit alpha, muscle-specific form (2078 aa).

Disordered stretches follow at residues 1-21 (MPGEATETVPATEQELPQPQA), 37-96 (ALGQ…LGTA), 595-614 (LGEPLPIGKPASSMTSPLGV), and 732-1944 (KSVP…KAMS). 2 stretches are compositionally biased toward polar residues: residues 9-21 (VPATEQELPQPQA) and 60-75 (AANQASPFPSPSTIAS). Residues 775–786 (SGASATASSKGT) show a composition bias toward low complexity. Residues 837–847 (PENSLSFQGSK) are compositionally biased toward polar residues. At serine 917 the chain carries Phosphoserine. The span at 933–1020 (SPSPKGAPTP…PPAVTPPSPK (88 aa)) shows a compositional bias: pro residues. Residues 1045–1067 (GSPAATPLPKGAPTTPAATLPSP) show a composition bias toward low complexity. Positions 1080–1113 (PTPPAATPPSPKGGPATPSPKGAPMPPAATPPSP) are enriched in pro residues. Over residues 1114–1130 (KGGLATPPHKGAPTTPA) the composition is skewed to low complexity. Composition is skewed to pro residues over residues 1131 to 1147 (ATPPSPKGGLATPPPKG) and 1154 to 1170 (ATPPSPKGGLATPPPKG). Phosphoserine is present on serine 1181. Low complexity-rich tracts occupy residues 1183–1199 (KGGLATPSPKGAPTTPA), 1206–1222 (KGGLATPSPKGAPTTPA), and 1229–1245 (KGGLATPSPKGAPTTPA). Pro residues-rich tracts occupy residues 1246–1270 (ATPPSPKGGPATPPPKGAPTPPAAT) and 1292–1344 (VTPP…PSPK). Over residues 1345–1366 (GTPTLPATTPSSKGGPTTPSSK) the composition is skewed to low complexity. 2 positions are modified to phosphoserine: serine 1397 and serine 1474. The span at 1470–1481 (VTPPSPKEPPAP) shows a compositional bias: pro residues. Residues 1485-1507 (ATSSSPKKAPATPAPMGAPTLPA) show a composition bias toward low complexity. A compositionally biased stretch (pro residues) spans 1611–1625 (KEAPTPPAVTPPSPE). The span at 1626 to 1637 (KGPATPAPKGTP) shows a compositional bias: low complexity. Residues 1647 to 1656 (LKDSPTSPAS) are compositionally biased toward polar residues. Basic and acidic residues predominate over residues 1744–1756 (DSSKTAKGKDASH). Residues 1794–1811 (PSPPVSLPLAPSPVPTLP) show a composition bias toward pro residues. Residues 1841–1845 (LPLIP) carry the PXLXP motif. Residues 1876-1891 (SAKQPVTKNNKGSGTE) show a composition bias toward polar residues. Residues 1892 to 1905 (SDSDESVPELEEQD) are compositionally biased toward acidic residues. Serine 1906 bears the Phosphoserine; by ILK1 mark. Residues 1907 to 1920 (TQATTQQAQLAAAA) are compositionally biased toward low complexity. Positions 1932-1943 (QSRSEKKARKAM) are required for DNA-binding. The region spanning 1933-1998 (SRSEKKARKA…AKIEDLSQQA (66 aa)) is the NAC-A/B domain. Serine 1995 is modified (phosphoserine). The residue at position 2005 (lysine 2005) is an N6-acetyllysine; alternate. A Glycyl lysine isopeptide (Lys-Gly) (interchain with G-Cter in SUMO2); alternate cross-link involves residue lysine 2005. A Phosphothreonine; by GSK3-beta modification is found at threonine 2022. Threonine 2024 bears the Phosphothreonine mark. A phosphoserine mark is found at serine 2029, serine 2049, serine 2054, and serine 2066. Positions 2039–2078 (VEVKDIELVMSQANVSRAKAVRALKNNSNDIVNAIMELTM) constitute a UBA domain.

As to quaternary structure, interacts (via PXLXP motif) with the muscle-restricted histone methyltransferase SMYD1 (via MYND-type zinc finger).

The protein resides in the cytoplasm. It localises to the nucleus. Its function is as follows. Cardiac- and muscle-specific transcription factor. May act to regulate the expression of genes involved in the development of myotubes. Plays a critical role in ventricular cardiomyocyte expansion and regulates postnatal skeletal muscle growth and regeneration. Involved in the organized assembly of thick and thin filaments of myofibril sarcomeres. This Homo sapiens (Human) protein is Nascent polypeptide-associated complex subunit alpha, muscle-specific form (NACA).